A 35-amino-acid polypeptide reads, in one-letter code: Pheromone-binding protein 2 (35 aa).

Belongs to the PBP/GOBP family. As to quaternary structure, homodimer. As to expression, antenna.

This major soluble protein in olfactory sensilla of male moths might serve to solubilize the extremely hydrophobic pheromone molecules and to transport pheromone through the aqueous lymph to receptors located on olfactory cilia. In Lymantria dispar (Gypsy moth), this protein is Pheromone-binding protein 2.